The primary structure comprises 136 residues: Putative pre-16S rRNA nuclease (136 aa).

The protein belongs to the YqgF nuclease family.

The protein localises to the cytoplasm. Could be a nuclease involved in processing of the 5'-end of pre-16S rRNA. The protein is Putative pre-16S rRNA nuclease of Francisella tularensis subsp. tularensis (strain FSC 198).